Consider the following 208-residue polypeptide: Large ribosomal subunit protein uL3 (208 aa).

Residue Q149 is modified to N5-methylglutamine.

Belongs to the universal ribosomal protein uL3 family. In terms of assembly, part of the 50S ribosomal subunit. Forms a cluster with proteins L14 and L19. Post-translationally, methylated by PrmB.

Its function is as follows. One of the primary rRNA binding proteins, it binds directly near the 3'-end of the 23S rRNA, where it nucleates assembly of the 50S subunit. The chain is Large ribosomal subunit protein uL3 from Histophilus somni (strain 129Pt) (Haemophilus somnus).